The following is a 320-amino-acid chain: Porphobilinogen deaminase (320 aa).

Cys248 carries the S-(dipyrrolylmethanemethyl)cysteine modification.

This sequence belongs to the HMBS family. As to quaternary structure, monomer. Dipyrromethane is required as a cofactor.

The enzyme catalyses 4 porphobilinogen + H2O = hydroxymethylbilane + 4 NH4(+). Its pathway is porphyrin-containing compound metabolism; protoporphyrin-IX biosynthesis; coproporphyrinogen-III from 5-aminolevulinate: step 2/4. It functions in the pathway porphyrin-containing compound metabolism; chlorophyll biosynthesis. Its function is as follows. Tetrapolymerization of the monopyrrole PBG into the hydroxymethylbilane pre-uroporphyrinogen in several discrete steps. The sequence is that of Porphobilinogen deaminase from Synechococcus elongatus (strain ATCC 33912 / PCC 7942 / FACHB-805) (Anacystis nidulans R2).